The following is a 293-amino-acid chain: MEIKKGTWIIKKGFAEMFKGGVIMDVTSAEQAKIAEEAGAVAVMALERVPADIRKEGGVARMASIAKIREIMEAVSIPVMAKVRIGHIAEAKILEELGVDFIDESEVLTPADDRFHINKHEFKVPFVCGARDLGEALRRIAEGAAMIRTKGEAGTGNVVEAVKHMRRMMEQIKQVTKMEDEELVAYGKEIGAPVELLREVKRLGRLPVVNFAAGGVATPADAALMMMLGADGVFVGSGIFKSKDPRKMAKAMVLAVTYWDNPRILLKISEDIGEPMRGLDVEELEVRMQERGW.

Asp25 contacts D-ribose 5-phosphate. The active-site Schiff-base intermediate with D-ribose 5-phosphate is Lys82. Gly154 lines the D-ribose 5-phosphate pocket. Arg166 is a D-glyceraldehyde 3-phosphate binding site. D-ribose 5-phosphate-binding positions include Gly215 and 236–237 (GS).

It belongs to the PdxS/SNZ family. In terms of assembly, in the presence of PdxT, forms a dodecamer of heterodimers.

The enzyme catalyses aldehydo-D-ribose 5-phosphate + D-glyceraldehyde 3-phosphate + L-glutamine = pyridoxal 5'-phosphate + L-glutamate + phosphate + 3 H2O + H(+). It participates in cofactor biosynthesis; pyridoxal 5'-phosphate biosynthesis. Its function is as follows. Catalyzes the formation of pyridoxal 5'-phosphate from ribose 5-phosphate (RBP), glyceraldehyde 3-phosphate (G3P) and ammonia. The ammonia is provided by the PdxT subunit. Can also use ribulose 5-phosphate and dihydroxyacetone phosphate as substrates, resulting from enzyme-catalyzed isomerization of RBP and G3P, respectively. In Thermotoga petrophila (strain ATCC BAA-488 / DSM 13995 / JCM 10881 / RKU-1), this protein is Pyridoxal 5'-phosphate synthase subunit PdxS.